The sequence spans 371 residues: Cytochrome b (371 aa).

Transmembrane regions (helical) follow at residues F25–I45, W69–I90, W105–L125, and F170–M190. Residues H75 and H89 each contribute to the heme b site. H174 and H188 together coordinate heme b. H193 serves as a coordination point for a ubiquinone. The next 4 helical transmembrane spans lie at N218–L238, L280–H300, M312–T332, and F339–P358.

This sequence belongs to the cytochrome b family. The cytochrome bc1 complex contains 3 respiratory subunits (MT-CYB, CYC1 and UQCRFS1), 2 core proteins (UQCRC1 and UQCRC2) and probably 6 low-molecular weight proteins. It depends on heme b as a cofactor.

The protein localises to the mitochondrion inner membrane. In terms of biological role, component of the ubiquinol-cytochrome c reductase complex (complex III or cytochrome b-c1 complex) that is part of the mitochondrial respiratory chain. The b-c1 complex mediates electron transfer from ubiquinol to cytochrome c. Contributes to the generation of a proton gradient across the mitochondrial membrane that is then used for ATP synthesis. The protein is Cytochrome b (MT-CYB) of Elapsoidea nigra (Usambara garter snake).